The sequence spans 999 residues: Sarcoplasmic/endoplasmic reticulum calcium ATPase 3 (999 aa).

Residues 1–48 (MEAAHSVPVQDVLSRFGVAESCGLSPEQVRRNREKYGPNELPAEERKS) are Cytoplasmic-facing. Residues 49-69 (LWELVLEQFEDLLVRILLMAA) form a helical membrane-spanning segment. Residues 70 to 89 (FLSFILAWFEEGEESTTAFV) lie on the Lumenal side of the membrane. The helical transmembrane segment at 90 to 110 (EPIVIIMILIANAVVGVWQER) threads the bilayer. Residues 111 to 253 (NAESAIEALK…PEKTPLQQKL (143 aa)) are Cytoplasmic-facing. A helical membrane pass occupies residues 254-273 (DEFSQQLSKVIFLVCIAVWV). Over 274 to 295 (INISHFSDPVHGGSWFRGAIYY) the chain is Lumenal. A helical membrane pass occupies residues 296-313 (FKTSVALAVAAIPEGLPA). Ca(2+) is bound by residues Val304, Ala305, Ile307, and Glu309. Residues 314-757 (VITTCLALGT…EEGRAIYNNM (444 aa)) lie on the Cytoplasmic side of the membrane. Asp351 functions as the 4-aspartylphosphate intermediate in the catalytic mechanism. The Mg(2+) site is built by Asp351 and Thr353. ATP is bound at residue Thr353. Positions 370-400 (EKVEGTQCSLHEFSITGSTYAPEGQILKDEK) are interaction with phospholamban 1. ATP-binding residues include Glu442, Arg489, Lys515, Arg560, Thr625, Gly626, Asp627, Arg678, and Lys684. Asp703 contributes to the Mg(2+) binding site. Asn706 contacts ATP. The helical transmembrane segment at 758–777 (KQFIRYLISSNVGEVVCIFL) threads the bilayer. Residues Asn768 and Glu771 each contribute to the Ca(2+) site. The Lumenal portion of the chain corresponds to 778–787 (TAILGLPEAL). Residues 788–808 (IPVQLLWVNLVTDGLPATALG) form a helical membrane-spanning segment. The segment at 788–808 (IPVQLLWVNLVTDGLPATALG) is interaction with phospholamban 2. The Ca(2+) site is built by Asn796, Thr799, and Asp800. Topologically, residues 809–828 (FNPPDLDIMDKLPRNPKEPL) are cytoplasmic. Residues 829 to 851 (ISGWLFFRYLAIGVYVGLATVGA) form a helical membrane-spanning segment. Residues 852–897 (ATWWFLYDAEGPQVSFHQLRNFMRCTEDNPIFEGVNCEIFESRYPT) lie on the Lumenal side of the membrane. The chain crosses the membrane as a helical span at residues 898–917 (TMALSVLVTIEMCNALNSVS). Ca(2+) is bound at residue Glu908. Topologically, residues 918–930 (ENQSLLRMPPWLN) are cytoplasmic. The chain crosses the membrane as a helical span at residues 931–949 (IWLLGAIVMSMALHFFILY). Over 950–964 (VKPMPLIFQVTPLSW) the chain is Lumenal. Residues 965–985 (PQWVVVLKISLPVILLDEGLK) traverse the membrane as a helical segment. Residues 986-999 (YLSRNHLEGEEDKK) lie on the Cytoplasmic side of the membrane.

Belongs to the cation transport ATPase (P-type) (TC 3.A.3) family. Type IIA subfamily. Interacts with sarcolipin (SLN). Interacts with phospholamban (PLN). Interacts with myoregulin (MRLN). Interacts with DWORF. It depends on Mg(2+) as a cofactor. Found in spleen, lung, intestine and brain.

It localises to the endoplasmic reticulum membrane. The protein localises to the sarcoplasmic reticulum membrane. The catalysed reaction is Ca(2+)(in) + ATP + H2O = Ca(2+)(out) + ADP + phosphate + H(+). Inhibited by sarcolipin (SLN), phospholamban (PLN) and myoregulin (MRLN). Enhanced by DWORF; DWORF increases activity by displacing sarcolipin (SLN), phospholamban (PLN) and myoregulin (MRLN). Its function is as follows. This magnesium-dependent enzyme catalyzes the hydrolysis of ATP coupled with the transport of calcium. Transports calcium ions from the cytosol into the sarcoplasmic/endoplasmic reticulum lumen. Contributes to calcium sequestration involved in muscular excitation/contraction. This is Sarcoplasmic/endoplasmic reticulum calcium ATPase 3 (ATP2A3) from Gallus gallus (Chicken).